We begin with the raw amino-acid sequence, 438 residues long: Zinc finger protein 641 (438 aa).

Positions 1-53 (MQAEDRSQFGSAAEMLSEQTAALGTGWESMNVQLDGAEPQVERGSQEERPWRT) are disordered. Residues 17-32 (SEQTAALGTGWESMNV) are compositionally biased toward polar residues. Over residues 40–51 (QVERGSQEERPW) the composition is skewed to basic and acidic residues. Positions 109 to 181 (VTIKDVSLCF…DPQDLEERDI (73 aa)) constitute a KRAB domain. A transactivation region spans residues 171–265 (PDPQDLEERD…EMDSLLRPHT (95 aa)). At Ser191 the chain carries Phosphoserine. 3 consecutive C2H2-type zinc fingers follow at residues 264–286 (HTCPQCGKQFVWGSHLARHQQTH), 292–314 (YSCLKCEKTFGRRHHLIRHQKTH), and 320–342 (SRCSECGKNFRCNSHLASHQRVH). Positions 345 to 367 (GKSCKGQEVGESPGTRKRQRAPP) are disordered. C2H2-type zinc fingers lie at residues 372–394 (HVCTECGKSFGRRHHLVRHWLTH) and 400–422 (FQCPRCEKSFGRKHHLDRHLLTH). The segment at 418-438 (HLLTHQGQSPRNSWDRGTSVF) is disordered. The span at 422 to 438 (HQGQSPRNSWDRGTSVF) shows a compositional bias: polar residues. Ser426 is modified (phosphoserine).

It belongs to the krueppel C2H2-type zinc-finger protein family. As to expression, highly expressed in skeletal muscle, moderate expression in heart, liver, and pancreas, lower expression in placenta, no expression seen in brain, lung, and kidney.

It is found in the nucleus. Transcriptional activator. Activates transcriptional activities of SRE and AP-1. The chain is Zinc finger protein 641 (ZNF641) from Homo sapiens (Human).